Consider the following 444-residue polypeptide: Methylenetetrahydrofolate--tRNA-(uracil-5-)-methyltransferase TrmFO (444 aa).

10-15 (GAGLAG) lines the FAD pocket.

This sequence belongs to the MnmG family. TrmFO subfamily. FAD serves as cofactor.

Its subcellular location is the cytoplasm. It carries out the reaction uridine(54) in tRNA + (6R)-5,10-methylene-5,6,7,8-tetrahydrofolate + NADH + H(+) = 5-methyluridine(54) in tRNA + (6S)-5,6,7,8-tetrahydrofolate + NAD(+). It catalyses the reaction uridine(54) in tRNA + (6R)-5,10-methylene-5,6,7,8-tetrahydrofolate + NADPH + H(+) = 5-methyluridine(54) in tRNA + (6S)-5,6,7,8-tetrahydrofolate + NADP(+). In terms of biological role, catalyzes the folate-dependent formation of 5-methyl-uridine at position 54 (M-5-U54) in all tRNAs. The chain is Methylenetetrahydrofolate--tRNA-(uracil-5-)-methyltransferase TrmFO from Streptococcus suis (strain 98HAH33).